The following is a 424-amino-acid chain: Gamma-glutamyl phosphate reductase (424 aa).

This sequence belongs to the gamma-glutamyl phosphate reductase family.

The protein localises to the cytoplasm. It carries out the reaction L-glutamate 5-semialdehyde + phosphate + NADP(+) = L-glutamyl 5-phosphate + NADPH + H(+). Its pathway is amino-acid biosynthesis; L-proline biosynthesis; L-glutamate 5-semialdehyde from L-glutamate: step 2/2. In terms of biological role, catalyzes the NADPH-dependent reduction of L-glutamate 5-phosphate into L-glutamate 5-semialdehyde and phosphate. The product spontaneously undergoes cyclization to form 1-pyrroline-5-carboxylate. The polypeptide is Gamma-glutamyl phosphate reductase (Dehalococcoides mccartyi (strain ATCC BAA-2100 / JCM 16839 / KCTC 5957 / BAV1)).